The following is a 467-amino-acid chain: Na(+)-translocating NADH-quinone reductase subunit A (467 aa).

Belongs to the NqrA family. In terms of assembly, composed of six subunits; NqrA, NqrB, NqrC, NqrD, NqrE and NqrF.

It carries out the reaction a ubiquinone + n Na(+)(in) + NADH + H(+) = a ubiquinol + n Na(+)(out) + NAD(+). In terms of biological role, NQR complex catalyzes the reduction of ubiquinone-1 to ubiquinol by two successive reactions, coupled with the transport of Na(+) ions from the cytoplasm to the periplasm. NqrA to NqrE are probably involved in the second step, the conversion of ubisemiquinone to ubiquinol. The polypeptide is Na(+)-translocating NADH-quinone reductase subunit A (Chlamydia pneumoniae (Chlamydophila pneumoniae)).